The chain runs to 302 residues: Aspartate carbamoyltransferase catalytic subunit (302 aa).

Residues Arg51 and Thr52 each coordinate carbamoyl phosphate. Residue Lys80 coordinates L-aspartate. Carbamoyl phosphate contacts are provided by Arg101, His129, and Gln132. The L-aspartate site is built by Arg162 and Arg224. The carbamoyl phosphate site is built by Leu263 and Pro264.

The protein belongs to the aspartate/ornithine carbamoyltransferase superfamily. ATCase family. In terms of assembly, heterododecamer (2C3:3R2) of six catalytic PyrB chains organized as two trimers (C3), and six regulatory PyrI chains organized as three dimers (R2).

The enzyme catalyses carbamoyl phosphate + L-aspartate = N-carbamoyl-L-aspartate + phosphate + H(+). It participates in pyrimidine metabolism; UMP biosynthesis via de novo pathway; (S)-dihydroorotate from bicarbonate: step 2/3. In terms of biological role, catalyzes the condensation of carbamoyl phosphate and aspartate to form carbamoyl aspartate and inorganic phosphate, the committed step in the de novo pyrimidine nucleotide biosynthesis pathway. This Azobacteroides pseudotrichonymphae genomovar. CFP2 protein is Aspartate carbamoyltransferase catalytic subunit.